The chain runs to 208 residues: Meiotically up-regulated gene 9 protein (208 aa).

The tract at residues 77-114 (VPASNEKAARVSNLKTVPSLKRENKEVNANSKPPVKQQ) is disordered.

Functionally, has a role in meiosis. The protein is Meiotically up-regulated gene 9 protein (mug9) of Schizosaccharomyces pombe (strain 972 / ATCC 24843) (Fission yeast).